A 143-amino-acid polypeptide reads, in one-letter code: MNIKLNEEKGFTLLESLLVLSLASILLVAVFTTLPPAYDNTAVRQAASQLKNDIMLTQQTAISRQQRTKILFHKKEYQLVIGDTVIERPYATGLSIELLTLKDRLEFNEKGHPNAGGKIRVKGHAVYDITVYLGSGRVNVERK.

Positions 1–10 (MNIKLNEEKG) are excised as a propeptide. F11 carries the N-methylphenylalanine modification. Residues 11 to 31 (FTLLESLLVLSLASILLVAVF) traverse the membrane as a helical segment.

In terms of assembly, the transformation pili are flexible filaments, consisting mainly of the major pilin ComGC and smaller amounts of the minor pilins, including at least ComGD, ComGF and ComGG. Interacts with ComGF. Interacts with ComGG. Post-translationally, processing of ComGD in competent cells requires ComC.

It localises to the cell membrane. The protein localises to the cell surface. Required for formation of the type IV-like pilus (T4P) that plays a role in transformation. Transformation pili are dynamically extended and retracted, perhaps thereby promoting DNA uptake and transformation. Required for transformation and DNA binding. This chain is Competence protein ComGD (comGD), found in Bacillus subtilis (strain 168).